Here is a 378-residue protein sequence, read N- to C-terminus: Chaperone protein DnaJ (378 aa).

The 65-residue stretch at Glu-5–Gly-69 folds into the J domain. The CR-type zinc-finger motif lies at Gly-135–Ala-217. Residues Cys-148, Cys-151, Cys-165, Cys-168, Cys-191, Cys-194, Cys-205, and Cys-208 each coordinate Zn(2+). 4 CXXCXGXG motif repeats span residues Cys-148–Gly-155, Cys-165–Gly-172, Cys-191–Gly-198, and Cys-205–Gly-212.

The protein belongs to the DnaJ family. Homodimer. Requires Zn(2+) as cofactor.

It is found in the cytoplasm. Functionally, participates actively in the response to hyperosmotic and heat shock by preventing the aggregation of stress-denatured proteins and by disaggregating proteins, also in an autonomous, DnaK-independent fashion. Unfolded proteins bind initially to DnaJ; upon interaction with the DnaJ-bound protein, DnaK hydrolyzes its bound ATP, resulting in the formation of a stable complex. GrpE releases ADP from DnaK; ATP binding to DnaK triggers the release of the substrate protein, thus completing the reaction cycle. Several rounds of ATP-dependent interactions between DnaJ, DnaK and GrpE are required for fully efficient folding. Also involved, together with DnaK and GrpE, in the DNA replication of plasmids through activation of initiation proteins. The protein is Chaperone protein DnaJ of Streptococcus pneumoniae serotype 4 (strain ATCC BAA-334 / TIGR4).